We begin with the raw amino-acid sequence, 505 residues long: Activin receptor type-1B (505 aa).

The signal sequence occupies residues 1–23 (MAESAGASSFFPLVVLLLAGSGG). Over 24–126 (SGPRGIQALL…AHPSMWGPVE (103 aa)) the chain is Extracellular. A glycan (N-linked (GlcNAc...) asparagine) is linked at Asn-43. A helical transmembrane segment spans residues 127-149 (LVGIIAGPVFLLFLIIIIVFLVI). Residues 150 to 505 (NYHQRVYHNR…QLSVQEDVKI (356 aa)) are Cytoplasmic-facing. Residues 177–206 (KTLQDLVYDLSTSGSGSGLPLFVQRTVART) enclose the GS domain. Residues 207 to 497 (IVLQEIIGKG…LRIKKTLSQL (291 aa)) form the Protein kinase domain. ATP-binding positions include 213 to 221 (IGKGRFGEV) and Lys-234. Asp-335 acts as the Proton acceptor in catalysis. Tyr-380 is modified (phosphotyrosine).

This sequence belongs to the protein kinase superfamily. TKL Ser/Thr protein kinase family. TGFB receptor subfamily. As to quaternary structure, forms an activin receptor complex with activin receptor type-2 (ACVR2A or ACVR2B). Part of a complex consisting of MAGI2/ARIP1, ACVR2A, ACVR1B and SMAD3. Interacts with SMAD2 and SMAD3. Interacts with SMAD7. Interacts with FKBP1A. Interacts with IGSF1. Interacts with CRIPTO. Interacts with TDP2. Interacts with TSC22D1/TSC-22. Post-translationally, autophosphorylated. Phosphorylated by activin receptor type-2 (ACVR2A or ACVR2B) in response to activin-binding at serine and threonine residues in the GS domain. Phosphorylation of ACVR1B by activin receptor type-2 regulates association with SMAD7. Ubiquitinated. Level of ubiquitination is regulated by the SMAD7-SMURF1 complex. In terms of processing, ubiquitinated.

The protein localises to the cell membrane. It catalyses the reaction L-threonyl-[receptor-protein] + ATP = O-phospho-L-threonyl-[receptor-protein] + ADP + H(+). It carries out the reaction L-seryl-[receptor-protein] + ATP = O-phospho-L-seryl-[receptor-protein] + ADP + H(+). Activin receptor type-2 (ACVR2A or ACVR2B) activates the type-1 receptor through phosphorylation of its regulatory GS domain. Its function is as follows. Transmembrane serine/threonine kinase activin type-1 receptor forming an activin receptor complex with activin receptor type-2 (ACVR2A or ACVR2B). Transduces the activin signal from the cell surface to the cytoplasm and is thus regulating a many physiological and pathological processes including neuronal differentiation and neuronal survival, hair follicle development and cycling, FSH production by the pituitary gland, wound healing, extracellular matrix production, immunosuppression and carcinogenesis. Activin is also thought to have a paracrine or autocrine role in follicular development in the ovary. Within the receptor complex, type-2 receptors (ACVR2A and/or ACVR2B) act as a primary activin receptors whereas the type-1 receptors like ACVR1B act as downstream transducers of activin signals. Activin binds to type-2 receptor at the plasma membrane and activates its serine-threonine kinase. The activated receptor type-2 then phosphorylates and activates the type-1 receptor such as ACVR1B. Once activated, the type-1 receptor binds and phosphorylates the SMAD proteins SMAD2 and SMAD3, on serine residues of the C-terminal tail. Soon after their association with the activin receptor and subsequent phosphorylation, SMAD2 and SMAD3 are released into the cytoplasm where they interact with the common partner SMAD4. This SMAD complex translocates into the nucleus where it mediates activin-induced transcription. Inhibitory SMAD7, which is recruited to ACVR1B through FKBP1A, can prevent the association of SMAD2 and SMAD3 with the activin receptor complex, thereby blocking the activin signal. Activin signal transduction is also antagonized by the binding to the receptor of inhibin-B via the IGSF1 inhibin coreceptor. ACVR1B also phosphorylates TDP2. The protein is Activin receptor type-1B (Acvr1b) of Mus musculus (Mouse).